Reading from the N-terminus, the 1516-residue chain is Neurite extension and migration factor (1516 aa).

Residues 380–405 (LDKKKGKEEGQEDKGVEKKDGKDNGE) show a composition bias toward basic and acidic residues. Disordered regions lie at residues 380 to 440 (LDKK…GSFS), 589 to 610 (QKKK…SQKQ), 1158 to 1225 (TFND…STKK), 1373 to 1419 (TPQE…PGYN), and 1437 to 1479 (LGNN…ESGT). Polar residues-rich tracts occupy residues 596 to 610 (NTNT…SQKQ), 1158 to 1170 (TFND…STNN), and 1185 to 1194 (GAMNQSSSQK). A compositionally biased stretch (basic residues) spans 1443 to 1453 (THKKLYRHKSS). A compositionally biased stretch (basic and acidic residues) spans 1456-1479 (ALRDEKCKGKHMEREQVHKDESGT).

Highly expressed in fetal and adult brain, predominantly in the cerebral cortex and the cerebellum. Also expressed in other tissues but to a lesser extent.

It localises to the nucleus. It is found in the cytoplasm. In terms of biological role, involved in neurite outgrowth by regulating cell-cell adhesion via the N-cadherin signaling pathway. May act by regulating expression of protein-coding genes, such as N-cadherins and integrin beta-1 (ITGB1). This Homo sapiens (Human) protein is Neurite extension and migration factor.